A 230-amino-acid chain; its full sequence is Carbohydrate deacetylase (230 aa).

Residues His-59 and His-123 each contribute to the Mg(2+) site.

This sequence belongs to the YdjC deacetylase family. As to quaternary structure, homodimer. The cofactor is Mg(2+).

Probably catalyzes the deacetylation of acetylated carbohydrates an important step in the degradation of oligosaccharides. The sequence is that of Carbohydrate deacetylase from Oceanobacillus iheyensis (strain DSM 14371 / CIP 107618 / JCM 11309 / KCTC 3954 / HTE831).